Here is a 175-residue protein sequence, read N- to C-terminus: uncharacterized protein (175 aa).

The region spanning 10–157 is the HTH marR-type domain; it reads LFELYAELIH…AERLFRDLVT (148 aa). Positions 68–91 form a DNA-binding region, H-T-H motif; the sequence is VTSIAEKMNTTKATVSRISTKLLG.

It localises to the cytoplasm. This is an uncharacterized protein from Bacillus subtilis (strain 168).